The primary structure comprises 870 residues: DNA mismatch repair protein MutS (870 aa).

Residue 620 to 627 (GPNMAGKS) participates in ATP binding.

This sequence belongs to the DNA mismatch repair MutS family.

In terms of biological role, this protein is involved in the repair of mismatches in DNA. It is possible that it carries out the mismatch recognition step. This protein has a weak ATPase activity. The chain is DNA mismatch repair protein MutS from Acetivibrio thermocellus (strain ATCC 27405 / DSM 1237 / JCM 9322 / NBRC 103400 / NCIMB 10682 / NRRL B-4536 / VPI 7372) (Clostridium thermocellum).